Consider the following 349-residue polypeptide: Dihydroorotate dehydrogenase (quinone) (349 aa).

Residues 67–71 (AGLDK) and Thr91 contribute to the FMN site. Lys71 provides a ligand contact to substrate. 116-120 (NRLGF) contacts substrate. The FMN site is built by Asn147 and Asn180. Asn180 contacts substrate. The active-site Nucleophile is Ser183. Residue Asn185 participates in substrate binding. FMN contacts are provided by Lys225 and Thr253. Position 254-255 (254-255 (NT)) interacts with substrate. FMN-binding positions include Gly276, Gly305, and 326–327 (YT).

Belongs to the dihydroorotate dehydrogenase family. Type 2 subfamily. In terms of assembly, monomer. FMN is required as a cofactor.

The protein resides in the cell membrane. The catalysed reaction is (S)-dihydroorotate + a quinone = orotate + a quinol. The protein operates within pyrimidine metabolism; UMP biosynthesis via de novo pathway; orotate from (S)-dihydroorotate (quinone route): step 1/1. Catalyzes the conversion of dihydroorotate to orotate with quinone as electron acceptor. The chain is Dihydroorotate dehydrogenase (quinone) from Bordetella parapertussis (strain 12822 / ATCC BAA-587 / NCTC 13253).